The following is a 344-amino-acid chain: Ribosomal RNA small subunit methyltransferase H 2 (344 aa).

S-adenosyl-L-methionine is bound by residues 78 to 80, aspartate 98, phenylalanine 131, aspartate 145, and glutamine 152; that span reads GGH.

This sequence belongs to the methyltransferase superfamily. RsmH family.

Its subcellular location is the cytoplasm. The enzyme catalyses cytidine(1402) in 16S rRNA + S-adenosyl-L-methionine = N(4)-methylcytidine(1402) in 16S rRNA + S-adenosyl-L-homocysteine + H(+). Specifically methylates the N4 position of cytidine in position 1402 (C1402) of 16S rRNA. The protein is Ribosomal RNA small subunit methyltransferase H 2 of Acholeplasma laidlawii (strain PG-8A).